Here is a 427-residue protein sequence, read N- to C-terminus: MMPSESGDESLEQPAAQVGTGAASAVATAGAAGGGPDLEASSASLGRHQSRLSWPQVKRLDALLKEPIPIHGRGNFPTLSVQPQQIVQVVRSSLEEQGLHVHSVRLHGSAASHVLHPESGLGYKDLDLVFQMDLQSEASFQLTKAVVLACLLDFLPAGVSRAKITPLTLKEAYVQKLVKVCTDLDRWSLISLSNKSGKNVELKFVDSVRRQFEFSIDSFQIILDSLLLFGQCSSTPMSEAFHPTVTGESLYGDFAEALEHLQHRVIATRSPEEIRGGGLLKYCHLLVRGFRPRPSTDVRALQRYMCSRFFIDFPDPVEQRRILERYLEAHFGGAEAARRYACLVTLHRVVNESTVCLMSHERRQTLDLITMLALQALAEQGPAAMAALAWRRPGSDGVVPATVNYYVTPMQPLLPRAHSYPTWLPCN.

Residues 1-11 (MMPSESGDESL) show a composition bias toward acidic residues. Residues 1-46 (MMPSESGDESLEQPAAQVGTGAASAVATAGAAGGGPDLEASSASLG) form a disordered region. Residues 15-30 (AAQVGTGAASAVATAG) show a composition bias toward low complexity.

Belongs to the TENT family.

The protein resides in the cytoplasm. Its subcellular location is the nucleus. It catalyses the reaction RNA(n) + ATP = RNA(n)-3'-adenine ribonucleotide + diphosphate. Catalyzes the transfer of one adenosine molecule from an ATP to an mRNA poly(A) tail bearing a 3'-OH terminal group in an ATP hydrolysis-dependent manner. May be involved in maintaining the translation efficiency of at least some genes through preventing degradation of their mRNAs. Prefers RNA molecules that are adenosine-rich close to 3'-end. In addition, may inhibit cell proliferation and cell cycle progression through ubiquitination of beta-catenin/CTNNB1. In Rattus norvegicus (Rat), this protein is Terminal nucleotidyltransferase 5B.